A 121-amino-acid chain; its full sequence is Large ribosomal subunit protein uL18 (121 aa).

It belongs to the universal ribosomal protein uL18 family. Part of the 50S ribosomal subunit; part of the 5S rRNA/L5/L18/L25 subcomplex. Contacts the 5S and 23S rRNAs.

Its function is as follows. This is one of the proteins that bind and probably mediate the attachment of the 5S RNA into the large ribosomal subunit, where it forms part of the central protuberance. The polypeptide is Large ribosomal subunit protein uL18 (Bordetella avium (strain 197N)).